Reading from the N-terminus, the 371-residue chain is D-erythrose-4-phosphate dehydrogenase (371 aa).

An NAD(+)-binding site is contributed by 12 to 13 (RI). Residues 154–156 (SCT), R200, 213–214 (TK), and R236 contribute to the substrate site. The active-site Nucleophile is the C155. NAD(+) is bound at residue N318.

The protein belongs to the glyceraldehyde-3-phosphate dehydrogenase family. Epd subfamily. In terms of assembly, homotetramer.

It is found in the cytoplasm. It catalyses the reaction D-erythrose 4-phosphate + NAD(+) + H2O = 4-phospho-D-erythronate + NADH + 2 H(+). Its pathway is cofactor biosynthesis; pyridoxine 5'-phosphate biosynthesis; pyridoxine 5'-phosphate from D-erythrose 4-phosphate: step 1/5. Functionally, catalyzes the NAD-dependent conversion of D-erythrose 4-phosphate to 4-phosphoerythronate. In Psychromonas ingrahamii (strain DSM 17664 / CCUG 51855 / 37), this protein is D-erythrose-4-phosphate dehydrogenase.